The sequence spans 566 residues: Chromatin assembly factor 1 subunit B (566 aa).

WD repeat units lie at residues 11–54, 64–103, 127–166, 169–208, 228–279, and 351–392; these read HNKE…DGKA, RHTKAVNVVRFSPSGEVLASGGDDAVILLWKLNDSKELEP, GHLEDVYDICWTSDGNYMASASVDNTAIMWDVVKGQKVSI, EHKSYVQGITWDPLGQYIATLSCDRVLRVYNTQTKRVAFN, FHDD…RPMG, and IHYH…IPLK. 2 disordered regions span residues 411-481 and 501-566; these read KSQP…NQPR and IPLK…KPNK. 2 stretches are compositionally biased toward polar residues: residues 425–437 and 469–478; these read TEGTSLSTPTLQP and QPASQSTKVN.

The protein belongs to the WD repeat HIR1 family. Interacts with CHAF1A.

Its subcellular location is the nucleus. Functionally, acts as a component of the histone chaperone complex chromatin assembly factor 1 (CAF-1), which assembles histone octamers onto DNA during replication and repair. CAF-1 performs the first step of the nucleosome assembly process, bringing newly synthesized histones H3 and H4 to replicating DNA; histones H2A/H2B can bind to this chromatin precursor subsequent to DNA replication to complete the histone octamer. In Gallus gallus (Chicken), this protein is Chromatin assembly factor 1 subunit B (CHAF1B).